The primary structure comprises 292 residues: Phosphoribulokinase, chromosomal (292 aa).

12–20 (GSSGAGTTS) is a binding site for ATP.

This sequence belongs to the phosphoribulokinase family. As to quaternary structure, homooctamer.

The catalysed reaction is D-ribulose 5-phosphate + ATP = D-ribulose 1,5-bisphosphate + ADP + H(+). It participates in carbohydrate biosynthesis; Calvin cycle. The sequence is that of Phosphoribulokinase, chromosomal (cfxP) from Cupriavidus necator (strain ATCC 17699 / DSM 428 / KCTC 22496 / NCIMB 10442 / H16 / Stanier 337) (Ralstonia eutropha).